We begin with the raw amino-acid sequence, 95 residues long: Protein TusB (95 aa).

It belongs to the DsrH/TusB family. Heterohexamer, formed by a dimer of trimers. The hexameric TusBCD complex contains 2 copies each of TusB, TusC and TusD. The TusBCD complex interacts with TusE.

The protein resides in the cytoplasm. Its function is as follows. Part of a sulfur-relay system required for 2-thiolation of 5-methylaminomethyl-2-thiouridine (mnm(5)s(2)U) at tRNA wobble positions. In Serratia proteamaculans (strain 568), this protein is Protein TusB.